The sequence spans 123 residues: Double-stranded DNA deaminase immunity protein (123 aa).

As to quaternary structure, the toxic domain forms a 1:1 complex with the DddI immunity protein. This protein blocks the active site of the toxin.

Functionally, immunity protein component of a toxin-immunity protein module, which functions as a cellular contact-dependent growth inhibition (CDI) system. CDI modules allow bacteria to communicate with and inhibit the growth of closely related neighboring bacteria in a contact-dependent fashion. Bacteria that have this module inhibit or kill bacteria without it, giving them a growth advantage. Specifically inhibits the toxic activity of cognate toxin DddA (C-terminal 163 residue fragment) upon expression in E.coli. This chain is Double-stranded DNA deaminase immunity protein, found in Burkholderia cenocepacia (strain H111).